Reading from the N-terminus, the 417-residue chain is BSD domain-containing protein 1-B (417 aa).

The region spanning 153–205 (WLAYWDPEQRKAEISEPLVTSPSIRALFTKMVPAAVSHSEFWQRYFYKVHQLE) is the BSD domain. Disordered regions lie at residues 215-234 (KQRA…EEEE), 262-292 (HVED…SISP), and 323-390 (AAET…DFDM). Residues 262–278 (HVEDKSEKTAELNRDHT) show a composition bias toward basic and acidic residues. Low complexity predominate over residues 281-292 (TSPSESSESISP). Positions 332 to 343 (PVEQTGKSNAQM) are enriched in polar residues. Residues 345 to 356 (THREDPPSDLRV) are compositionally biased toward basic and acidic residues. The segment covering 360 to 379 (NSDSGKSTPSNNGQKGSSTD) has biased composition (polar residues). A compositionally biased stretch (acidic residues) spans 380–390 (VSEDWEKDFDM).

This chain is BSD domain-containing protein 1-B (bsdc1-b), found in Xenopus laevis (African clawed frog).